The following is a 401-amino-acid chain: uncharacterized protein (401 aa).

Position 242 is an N6-(pyridoxal phosphate)lysine (K242).

Belongs to the class-I pyridoxal-phosphate-dependent aminotransferase family. Homodimer. It depends on pyridoxal 5'-phosphate as a cofactor.

The protein localises to the cytoplasm. This is an uncharacterized protein from Saccharolobus solfataricus (strain ATCC 35092 / DSM 1617 / JCM 11322 / P2) (Sulfolobus solfataricus).